We begin with the raw amino-acid sequence, 467 residues long: tRNA-2-methylthio-N(6)-dimethylallyladenosine synthase (467 aa).

Residues 1–20 (MSDDTTQIEPAMAQETSPRA) form a disordered region. One can recognise an MTTase N-terminal domain in the interval 23–143 (RKVFVKTYGC…LPNALARVRG (121 aa)). Cys-32, Cys-68, Cys-106, Cys-184, Cys-188, and Cys-191 together coordinate [4Fe-4S] cluster. Residues 170–402 (RKRGVSAFLT…QALLSAQQYA (233 aa)) form the Radical SAM core domain. Residues 405-467 (DSMIGRKMDV…TNSLIAQKLA (63 aa)) enclose the TRAM domain.

The protein belongs to the methylthiotransferase family. MiaB subfamily. As to quaternary structure, monomer. [4Fe-4S] cluster is required as a cofactor.

Its subcellular location is the cytoplasm. The catalysed reaction is N(6)-dimethylallyladenosine(37) in tRNA + (sulfur carrier)-SH + AH2 + 2 S-adenosyl-L-methionine = 2-methylsulfanyl-N(6)-dimethylallyladenosine(37) in tRNA + (sulfur carrier)-H + 5'-deoxyadenosine + L-methionine + A + S-adenosyl-L-homocysteine + 2 H(+). Catalyzes the methylthiolation of N6-(dimethylallyl)adenosine (i(6)A), leading to the formation of 2-methylthio-N6-(dimethylallyl)adenosine (ms(2)i(6)A) at position 37 in tRNAs that read codons beginning with uridine. The polypeptide is tRNA-2-methylthio-N(6)-dimethylallyladenosine synthase (Brucella canis (strain ATCC 23365 / NCTC 10854 / RM-666)).